The sequence spans 216 residues: Ras-related protein Rab-5C (216 aa).

Residues serine 30, alanine 31, glycine 33, lysine 34, serine 35, serine 36, histidine 47, glutamate 48, threonine 53, and glycine 79 each contribute to the GTP site. Mg(2+) is bound at residue serine 35. 2 short sequence motifs (switch) span residues 45 to 57 and 78 to 94; these read QFHE…IGAA and AGQE…YRGA. Threonine 53 lines the Mg(2+) pocket. At serine 85 the chain carries Phosphoserine. Residues asparagine 134, lysine 135, aspartate 137, alanine 165, and lysine 166 each contribute to the GTP site. Positions 185–216 are disordered; that stretch reads NEPQNAAGAPGRNRGVDLQENNPASRSQCCSN. The segment covering 203-216 has biased composition (polar residues); sequence QENNPASRSQCCSN. S-geranylgeranyl cysteine attachment occurs at residues cysteine 213 and cysteine 214.

This sequence belongs to the small GTPase superfamily. Rab family. In terms of assembly, interacts with EEA1 and INCA1. Interacts with GDI1, GDI2, CHML and CHM; phosphorylation at Ser-85 disrupts this interaction. It depends on Mg(2+) as a cofactor. Post-translationally, phosphorylation of Ser-85 in the switch II region by LRRK2 prevents the association of RAB regulatory proteins, including CHM, CHML and RAB GDP dissociation inhibitors GDI1 and GDI2.

Its subcellular location is the cell membrane. The protein localises to the early endosome membrane. It is found in the melanosome. It catalyses the reaction GTP + H2O = GDP + phosphate + H(+). Its activity is regulated as follows. Regulated by guanine nucleotide exchange factors (GEFs) which promote the exchange of bound GDP for free GTP. Regulated by GTPase activating proteins (GAPs) which increase the GTP hydrolysis activity. Inhibited by GDP dissociation inhibitors (GDIs). The small GTPases Rab are key regulators of intracellular membrane trafficking, from the formation of transport vesicles to their fusion with membranes. Rabs cycle between an inactive GDP-bound form and an active GTP-bound form that is able to recruit to membranes different sets of downstream effectors directly responsible for vesicle formation, movement, tethering and fusion. This is Ras-related protein Rab-5C (RAB5C) from Bos taurus (Bovine).